A 112-amino-acid chain; its full sequence is Probable 4-amino-4-deoxy-L-arabinose-phosphoundecaprenol flippase subunit ArnE (112 aa).

Residues 35-110 form the EamA domain; sequence RHILFWLGMA…IVVGIVILGT (76 aa). A run of 3 helical transmembrane segments spans residues 37–57, 66–86, and 89–109; these read ILFW…LWLS, IAYP…WGIW, and PVAR…VILG.

This sequence belongs to the ArnE family. As to quaternary structure, heterodimer of ArnE and ArnF.

Its subcellular location is the cell inner membrane. The protein operates within bacterial outer membrane biogenesis; lipopolysaccharide biosynthesis. Functionally, translocates 4-amino-4-deoxy-L-arabinose-phosphoundecaprenol (alpha-L-Ara4N-phosphoundecaprenol) from the cytoplasmic to the periplasmic side of the inner membrane. This chain is Probable 4-amino-4-deoxy-L-arabinose-phosphoundecaprenol flippase subunit ArnE, found in Klebsiella pneumoniae (strain 342).